Consider the following 311-residue polypeptide: Trem-like transcript 1 protein (311 aa).

The signal sequence occupies residues 1–15 (MGLTLLLLLLLGLEG). The Ig-like V-type domain occupies 16–121 (QGIVGSLPEV…PQILHRVSLN (106 aa)). Topologically, residues 16-162 (QGIVGSLPEV…EPSQDEKSIP (147 aa)) are extracellular. Disulfide bonds link cysteine 38-cysteine 104 and cysteine 52-cysteine 59. Residues 163–183 (LIWGAVLLVGLLVAAVVLFAV) form a helical membrane-spanning segment. Residues 184-311 (MAKRKQGNRL…NPPNNQTPSS (128 aa)) are Cytoplasmic-facing. The S-palmitoyl cysteine moiety is linked to residue cysteine 196. The tract at residues 229-263 (VPHIRLDSPPSFDNTTYTSLPLDSPSGKPSLPAPS) is disordered. The segment covering 239 to 249 (SFDNTTYTSLP) has biased composition (polar residues). The short motif at 279-284 (VTYATV) is the ITIM element. Residues 287-311 (PGGNKGGGTSCGPAQNPPNNQTPSS) are disordered.

In terms of assembly, when phosphorylated, interacts with PTPN6. When phosphorylated, interacts with PTPN11. Phosphorylated on tyrosine residues. Detected in platelets, monocytic leukemia and in T-cell leukemia.

It is found in the cell membrane. It localises to the cytoplasm. Functionally, cell surface receptor that may play a role in the innate and adaptive immune response. The sequence is that of Trem-like transcript 1 protein (TREML1) from Homo sapiens (Human).